A 571-amino-acid polypeptide reads, in one-letter code: Proline--tRNA ligase (571 aa).

This sequence belongs to the class-II aminoacyl-tRNA synthetase family. ProS type 1 subfamily. Homodimer.

The protein localises to the cytoplasm. The catalysed reaction is tRNA(Pro) + L-proline + ATP = L-prolyl-tRNA(Pro) + AMP + diphosphate. Catalyzes the attachment of proline to tRNA(Pro) in a two-step reaction: proline is first activated by ATP to form Pro-AMP and then transferred to the acceptor end of tRNA(Pro). As ProRS can inadvertently accommodate and process non-cognate amino acids such as alanine and cysteine, to avoid such errors it has two additional distinct editing activities against alanine. One activity is designated as 'pretransfer' editing and involves the tRNA(Pro)-independent hydrolysis of activated Ala-AMP. The other activity is designated 'posttransfer' editing and involves deacylation of mischarged Ala-tRNA(Pro). The misacylated Cys-tRNA(Pro) is not edited by ProRS. The protein is Proline--tRNA ligase of Stutzerimonas stutzeri (strain A1501) (Pseudomonas stutzeri).